Consider the following 437-residue polypeptide: Trigger factor (437 aa).

The PPIase FKBP-type domain occupies 163–248 (GDIAVINFEG…LNQIKAKVLP (86 aa)).

Belongs to the FKBP-type PPIase family. Tig subfamily.

It is found in the cytoplasm. The catalysed reaction is [protein]-peptidylproline (omega=180) = [protein]-peptidylproline (omega=0). Functionally, involved in protein export. Acts as a chaperone by maintaining the newly synthesized protein in an open conformation. Functions as a peptidyl-prolyl cis-trans isomerase. In Bdellovibrio bacteriovorus (strain ATCC 15356 / DSM 50701 / NCIMB 9529 / HD100), this protein is Trigger factor.